A 68-amino-acid polypeptide reads, in one-letter code: MIHVPVNANNSELAIRSLKKKMQRELVFRSMKMSRFYEPPSVKRVRKKQESERRHRKERAMRRRMMEE.

The segment at 39–68 (PPSVKRVRKKQESERRHRKERAMRRRMMEE) is disordered. Over residues 54–68 (RHRKERAMRRRMMEE) the composition is skewed to basic residues.

It belongs to the bacterial ribosomal protein bS21 family.

The polypeptide is Small ribosomal subunit protein bS21 (Orientia tsutsugamushi (strain Ikeda) (Rickettsia tsutsugamushi)).